The chain runs to 560 residues: Factor VII-activating protease (560 aa).

Positions 1-23 are cleaved as a signal peptide; the sequence is MFARMSDLHVLLLMALVGKTACG. A glycan (N-linked (GlcNAc...) asparagine) is linked at N54. 3 consecutive EGF-like domains span residues 73 to 109, 111 to 148, and 150 to 188; these read QADP…NKCQ, VQNT…PSCS, and VVPV…KFCE. 18 cysteine pairs are disulfide-bonded: C77/C88, C82/C97, C99/C108, C115/C125, C120/C136, C138/C147, C154/C165, C159/C176, C178/C187, C194/C276, C215/C257, C246/C271, C301/C435, C347/C363, C355/C424, C447/C515, C477/C493, and C505/C533. A Kringle domain is found at 193 to 276; the sequence is DCYVGDGYSY…KWEYCDVSAC (84 aa). N-linked (GlcNAc...) asparagine glycosylation occurs at N207. Residues 314 to 555 form the Peptidase S1 domain; the sequence is IYGGFKSTAG…FLNWIKATIK (242 aa). Active-site charge relay system residues include H362 and D411. Residue S509 is the Charge relay system of the active site.

This sequence belongs to the peptidase S1 family. In terms of assembly, heterodimer; disulfide-linked. Heterodimer of a 50 kDa heavy and a 27 kDa light chain linked by a disulfide bond. Proteolytic cleavage at Gly-23 or Met-27 can give rise to the 50 kDa heavy chain (HC) and cleavage at Arg-313 or Lys-319 can give rise to the 27 kDa light chain (LC). The HC can undergo further proteolytic cleavage giving rise to a 26 kDa fragment. The LC can undergo further proteolytic cleavage at Arg-313 leading to a 17-kDa fragment and at Arg-480 leading to a 8-kDa fragment. In terms of tissue distribution, ubiquitously expressed.

It is found in the secreted. Its function is as follows. Cleaves the alpha-chain at multiple sites and the beta-chain between 'Lys-53' and 'Lys-54' but not the gamma-chain of fibrinogen and therefore does not initiate the formation of the fibrin clot and does not cause the fibrinolysis directly. It does not cleave (activate) prothrombin and plasminogen but converts the inactive single chain urinary plasminogen activator (pro-urokinase) to the active two chain form. Activates coagulation factor VII. May function as a tumor suppressor negatively regulating cell proliferation and cell migration. The sequence is that of Factor VII-activating protease from Homo sapiens (Human).